The following is a 933-amino-acid chain: 2-oxoglutarate dehydrogenase E1 component (933 aa).

The protein belongs to the alpha-ketoglutarate dehydrogenase family. As to quaternary structure, homodimer. Part of the 2-oxoglutarate dehydrogenase (OGDH) complex composed of E1 (2-oxoglutarate dehydrogenase), E2 (dihydrolipoamide succinyltransferase) and E3 (dihydrolipoamide dehydrogenase); the complex contains multiple copies of the three enzymatic components (E1, E2 and E3). Requires thiamine diphosphate as cofactor.

It carries out the reaction N(6)-[(R)-lipoyl]-L-lysyl-[protein] + 2-oxoglutarate + H(+) = N(6)-[(R)-S(8)-succinyldihydrolipoyl]-L-lysyl-[protein] + CO2. Its function is as follows. E1 component of the 2-oxoglutarate dehydrogenase (OGDH) complex which catalyzes the decarboxylation of 2-oxoglutarate, the first step in the conversion of 2-oxoglutarate to succinyl-CoA and CO(2). The polypeptide is 2-oxoglutarate dehydrogenase E1 component (sucA) (Rickettsia typhi (strain ATCC VR-144 / Wilmington)).